The chain runs to 294 residues: Elongation factor Ts (294 aa).

The interval 79–82 (TDFV) is involved in Mg(2+) ion dislocation from EF-Tu.

It belongs to the EF-Ts family.

The protein resides in the cytoplasm. Associates with the EF-Tu.GDP complex and induces the exchange of GDP to GTP. It remains bound to the aminoacyl-tRNA.EF-Tu.GTP complex up to the GTP hydrolysis stage on the ribosome. The protein is Elongation factor Ts of Geobacillus sp. (strain WCH70).